We begin with the raw amino-acid sequence, 370 residues long: Chaperone protein DnaJ (370 aa).

The J domain maps to 4-68; that stretch reads DYYQVLGVSK…QKRAAYDRFG (65 aa). A CR-type zinc finger spans residues 133–211; it reads GIEKNISFSS…CHGMGRYHKQ (79 aa). The Zn(2+) site is built by cysteine 146, cysteine 149, cysteine 163, cysteine 166, cysteine 185, cysteine 188, cysteine 199, and cysteine 202. CXXCXGXG motif repeat units follow at residues 146-153, 163-170, 185-192, and 199-206; these read CDACHGTG, CDSCGGVG, CHKCQGNG, and CKKCHGMG.

This sequence belongs to the DnaJ family. In terms of assembly, homodimer. It depends on Zn(2+) as a cofactor.

The protein localises to the cytoplasm. Functionally, participates actively in the response to hyperosmotic and heat shock by preventing the aggregation of stress-denatured proteins and by disaggregating proteins, also in an autonomous, DnaK-independent fashion. Unfolded proteins bind initially to DnaJ; upon interaction with the DnaJ-bound protein, DnaK hydrolyzes its bound ATP, resulting in the formation of a stable complex. GrpE releases ADP from DnaK; ATP binding to DnaK triggers the release of the substrate protein, thus completing the reaction cycle. Several rounds of ATP-dependent interactions between DnaJ, DnaK and GrpE are required for fully efficient folding. Also involved, together with DnaK and GrpE, in the DNA replication of plasmids through activation of initiation proteins. In Rickettsia typhi (strain ATCC VR-144 / Wilmington), this protein is Chaperone protein DnaJ.